A 153-amino-acid polypeptide reads, in one-letter code: Iron-sulfur cluster assembly scaffold protein IscU 1 (153 aa).

[2Fe-2S] cluster-binding residues include cysteine 33, cysteine 58, histidine 101, and cysteine 102.

This sequence belongs to the NifU family. Forms a heterotetramer with IscS2.

Functionally, a scaffold on which IscS assembles Fe-S clusters. Subsequently gives the nascent cluster to other proteins. It is likely that Fe-S cluster coordination is flexible as the role of this complex is to build and then hand off Fe-S clusters. The chain is Iron-sulfur cluster assembly scaffold protein IscU 1 (iscU1) from Archaeoglobus fulgidus (strain ATCC 49558 / DSM 4304 / JCM 9628 / NBRC 100126 / VC-16).